Here is a 448-residue protein sequence, read N- to C-terminus: Trigger factor (448 aa).

One can recognise a PPIase FKBP-type domain in the interval 167 to 253 (GSIVRVDFVE…VKDIKRRDIP (87 aa)).

It belongs to the FKBP-type PPIase family. Tig subfamily.

The protein resides in the cytoplasm. It catalyses the reaction [protein]-peptidylproline (omega=180) = [protein]-peptidylproline (omega=0). Involved in protein export. Acts as a chaperone by maintaining the newly synthesized protein in an open conformation. Functions as a peptidyl-prolyl cis-trans isomerase. This is Trigger factor from Borrelia duttonii (strain Ly).